Reading from the N-terminus, the 54-residue chain is uncharacterized protein (54 aa).

A compositionally biased stretch (basic and acidic residues) spans 23 to 35 (DVMQEGETAKELN). A disordered region spans residues 23–54 (DVMQEGETAKELNYEGEDMQATSSAQNRQTSV). Residues 42–54 (QATSSAQNRQTSV) show a composition bias toward polar residues.

This is an uncharacterized protein from Bacillus subtilis (strain 168).